Here is a 60-residue protein sequence, read N- to C-terminus: Putative transmembrane protein 74 (60 aa).

2 consecutive transmembrane segments (helical) span residues 4-24 (FSVIMYLINSVIFTFMIFLTF) and 35-55 (WVYILIGFFTAIVFHSGYQAG).

The protein resides in the host membrane. The protein is Putative transmembrane protein 74 (SIFV0074) of Sulfolobus islandicus filamentous virus (isolate Iceland/Hveragerdi) (SIFV).